Consider the following 326-residue polypeptide: tRNA dimethylallyltransferase (326 aa).

ATP is bound at residue 10–17 (GPTGTGKT). 12–17 (TGTGKT) provides a ligand contact to substrate. The segment at 35–38 (DSMQ) is interaction with substrate tRNA.

Belongs to the IPP transferase family. As to quaternary structure, monomer. It depends on Mg(2+) as a cofactor.

The enzyme catalyses adenosine(37) in tRNA + dimethylallyl diphosphate = N(6)-dimethylallyladenosine(37) in tRNA + diphosphate. Catalyzes the transfer of a dimethylallyl group onto the adenine at position 37 in tRNAs that read codons beginning with uridine, leading to the formation of N6-(dimethylallyl)adenosine (i(6)A). This is tRNA dimethylallyltransferase from Dictyoglomus turgidum (strain DSM 6724 / Z-1310).